We begin with the raw amino-acid sequence, 206 residues long: MRPLTPRQAEILELIKRNIADTGMPPTRAEIATRLGFKSANAAEEHLKALAKKGCIEIMPGTSRGIRLTAEVEEVTETGLPLIGQVAAGEPILAQEHVEQYYQVDPSMFHPAADFLLRVKGDSMKNIGILEGDLLAVHKVQQARNGQVVVARVDDDVTVKRFEKKGNVVYLHAENEDYSPIKVDLGYQSLTIEGLAVGVIRNGDWL.

A DNA-binding region (H-T-H motif) is located at residues 28–48 (RAEIATRLGFKSANAAEEHLK). Active-site for autocatalytic cleavage activity residues include Ser-123 and Lys-160.

It belongs to the peptidase S24 family. Homodimer.

The catalysed reaction is Hydrolysis of Ala-|-Gly bond in repressor LexA.. Functionally, represses a number of genes involved in the response to DNA damage (SOS response), including recA and lexA. In the presence of single-stranded DNA, RecA interacts with LexA causing an autocatalytic cleavage which disrupts the DNA-binding part of LexA, leading to derepression of the SOS regulon and eventually DNA repair. The polypeptide is LexA repressor (Shewanella baltica (strain OS223)).